A 48-amino-acid chain; its full sequence is Fimbrial assembly protein, serogroup F1 (48 aa).

This Dichelobacter nodosus (Bacteroides nodosus) protein is Fimbrial assembly protein, serogroup F1 (fimB).